Reading from the N-terminus, the 133-residue chain is Holo-[acyl-carrier-protein] synthase (133 aa).

Asp-8 and Glu-57 together coordinate Mg(2+).

Belongs to the P-Pant transferase superfamily. AcpS family. Mg(2+) serves as cofactor.

It is found in the cytoplasm. It catalyses the reaction apo-[ACP] + CoA = holo-[ACP] + adenosine 3',5'-bisphosphate + H(+). In terms of biological role, transfers the 4'-phosphopantetheine moiety from coenzyme A to a Ser of acyl-carrier-protein. In Bartonella quintana (strain Toulouse) (Rochalimaea quintana), this protein is Holo-[acyl-carrier-protein] synthase.